Consider the following 371-residue polypeptide: Aminomethyltransferase (371 aa).

This sequence belongs to the GcvT family. In terms of assembly, the glycine cleavage system is composed of four proteins: P, T, L and H.

It carries out the reaction N(6)-[(R)-S(8)-aminomethyldihydrolipoyl]-L-lysyl-[protein] + (6S)-5,6,7,8-tetrahydrofolate = N(6)-[(R)-dihydrolipoyl]-L-lysyl-[protein] + (6R)-5,10-methylene-5,6,7,8-tetrahydrofolate + NH4(+). In terms of biological role, the glycine cleavage system catalyzes the degradation of glycine. This Leptospira interrogans serogroup Icterohaemorrhagiae serovar Lai (strain 56601) protein is Aminomethyltransferase.